The following is a 211-amino-acid chain: Ribosomal RNA small subunit methyltransferase G (211 aa).

S-adenosyl-L-methionine contacts are provided by residues Gly-78, Met-83, 129 to 130 (AE), and Arg-144.

Belongs to the methyltransferase superfamily. RNA methyltransferase RsmG family.

The protein localises to the cytoplasm. The enzyme catalyses guanosine(527) in 16S rRNA + S-adenosyl-L-methionine = N(7)-methylguanosine(527) in 16S rRNA + S-adenosyl-L-homocysteine. Its function is as follows. Specifically methylates the N7 position of guanine in position 527 of 16S rRNA. In Pseudomonas syringae pv. tomato (strain ATCC BAA-871 / DC3000), this protein is Ribosomal RNA small subunit methyltransferase G.